Consider the following 999-residue polypeptide: Bifunctional glutamine synthetase adenylyltransferase/adenylyl-removing enzyme (999 aa).

The interval 1–493 (MFVRKPATER…LHAKLFYQPL (493 aa)) is adenylyl removase. The interval 498–999 (GHTALGIGEG…KAVVRKIFGG (502 aa)) is adenylyl transferase.

Belongs to the GlnE family. Requires Mg(2+) as cofactor.

The enzyme catalyses [glutamine synthetase]-O(4)-(5'-adenylyl)-L-tyrosine + phosphate = [glutamine synthetase]-L-tyrosine + ADP. The catalysed reaction is [glutamine synthetase]-L-tyrosine + ATP = [glutamine synthetase]-O(4)-(5'-adenylyl)-L-tyrosine + diphosphate. Involved in the regulation of glutamine synthetase GlnA, a key enzyme in the process to assimilate ammonia. When cellular nitrogen levels are high, the C-terminal adenylyl transferase (AT) inactivates GlnA by covalent transfer of an adenylyl group from ATP to specific tyrosine residue of GlnA, thus reducing its activity. Conversely, when nitrogen levels are low, the N-terminal adenylyl removase (AR) activates GlnA by removing the adenylyl group by phosphorolysis, increasing its activity. The regulatory region of GlnE binds the signal transduction protein PII (GlnB) which indicates the nitrogen status of the cell. In Mycolicibacterium smegmatis (strain ATCC 700084 / mc(2)155) (Mycobacterium smegmatis), this protein is Bifunctional glutamine synthetase adenylyltransferase/adenylyl-removing enzyme.